Here is a 156-residue protein sequence, read N- to C-terminus: uncharacterized protein (156 aa).

Helical transmembrane passes span 42–59 (LLMMTFAIVNLADYMTTV), 79–98 (ASFLLLKIAIVATAFALLLY), and 105–127 (SLGRGIYIGLVAGLAISTAVLGI).

Its subcellular location is the cell membrane. This is an uncharacterized protein from Archaeoglobus fulgidus (strain ATCC 49558 / DSM 4304 / JCM 9628 / NBRC 100126 / VC-16).